Consider the following 511-residue polypeptide: Synaptotagmin-6 (511 aa).

Residues Met-1–Ser-59 are Vesicular-facing. The cysteine motif stretch occupies residues Cys-12–Arg-38. Residues Leu-60–Phe-80 form a helical membrane-spanning segment. The Cytoplasmic segment spans residues Trp-81–Leu-511. Disordered stretches follow at residues Glu-92–Leu-119 and Thr-157–Gln-182. The segment covering Ser-94–Ser-103 has biased composition (low complexity). Polar residues-rich tracts occupy residues Glu-104–Gly-113 and Gln-160–His-172. Position 217 is a phosphoserine (Ser-217). C2 domains are found at residues Ser-230–Lys-351 and Asp-362–His-495. Residues Asp-261, Asp-267, Asp-319, Phe-320, Asp-321, Ser-324, Asp-327, Asp-393, Asp-399, Asp-453, and Asp-455 each contribute to the Ca(2+) site. The interval Met-483 to Leu-511 is necessary for cell membrane association (isoform 2).

Belongs to the synaptotagmin family. Isoform 1: Homodimer; disulfide-linked via the cysteine motif. Isoform 1: Can also form heterodimers with SYT3, SYT7, SYT9 and SYT10. Isoform 1: Interacts with STX1A, STX1B and STX2; the interaction is Ca(2+)-dependent. Isoform 2: Is not able to form homodimer and heterodimers. It depends on Ca(2+) as a cofactor. In terms of tissue distribution, isoform 1 is expressed in the olfactory bulb. Isoform 2 is expressed in the brain (at protein level).

It localises to the cytoplasmic vesicle. Its subcellular location is the secretory vesicle. It is found in the synaptic vesicle membrane. The protein localises to the membrane. The protein resides in the cytoplasm. It localises to the cytosol. Its subcellular location is the cell membrane. May be involved in Ca(2+)-dependent exocytosis of secretory vesicles through Ca(2+) and phospholipid binding to the C2 domain or may serve as Ca(2+) sensors in the process of vesicular trafficking and exocytosis. May mediate Ca(2+)-regulation of exocytosis in acrosomal reaction in sperm. This chain is Synaptotagmin-6 (Syt6), found in Mus musculus (Mouse).